Reading from the N-terminus, the 113-residue chain is U11-theraphotoxin-Hhn1f (113 aa).

The first 21 residues, 1-21 (MNTVRVTFLLVFVLAVSLGQA), serve as a signal peptide directing secretion. Residues 22–74 (DKDENRMEMQEKTEQGKSYLDFAENLLLQKLEELEAKLLEEDSKESRNSRQKR) constitute a propeptide that is removed on maturation. Residues 61–82 (EEDSKESRNSRQKRCIGEGVPC) form a disordered region. 3 cysteine pairs are disulfide-bonded: Cys-75/Cys-90, Cys-82/Cys-95, and Cys-89/Cys-110.

It belongs to the neurotoxin 14 (magi-1) family. 01 (HNTX-16) subfamily. Expressed by the venom gland.

It is found in the secreted. In terms of biological role, probable ion channel inhibitor. This Cyriopagopus hainanus (Chinese bird spider) protein is U11-theraphotoxin-Hhn1f.